The primary structure comprises 396 residues: Glyceraldehyde-3-phosphate dehydrogenase GAPA1, chloroplastic (396 aa).

The transit peptide at 1–60 (MASVTFSVPKGFTEFSGLRSSSASLPFGKKLSSDEFVSIVSFQTSAMGSSGGYRKGVTEA) directs the protein to the chloroplast. Residues 71 to 72 (RI), aspartate 95, and arginine 140 contribute to the NADP(+) site. D-glyceraldehyde 3-phosphate contacts are provided by residues 212–214 (SCT), threonine 243, arginine 258, 271–272 (TG), and arginine 294. Cysteine 213 serves as the catalytic Nucleophile. Residue asparagine 376 participates in NADP(+) binding.

This sequence belongs to the glyceraldehyde-3-phosphate dehydrogenase family. Tetramer of either four A chains (GAPDH 2) or two A and two B chains (GAPDH 1). In terms of tissue distribution, expressed in leaves and stems.

The protein localises to the plastid. Its subcellular location is the chloroplast membrane. The protein resides in the chloroplast stroma. The enzyme catalyses D-glyceraldehyde 3-phosphate + phosphate + NADP(+) = (2R)-3-phospho-glyceroyl phosphate + NADPH + H(+). It functions in the pathway carbohydrate biosynthesis; Calvin cycle. In terms of biological role, involved in the photosynthetic reductive pentose phosphate pathway (Calvin-Benson cycle). Catalyzes the reduction of 1,3-diphosphoglycerate by NADPH. This is Glyceraldehyde-3-phosphate dehydrogenase GAPA1, chloroplastic (GAPA1) from Arabidopsis thaliana (Mouse-ear cress).